The chain runs to 297 residues: Cell division protein ZipA (297 aa).

Residue Met-1 is a topological domain, periplasmic. Residues 2-22 traverse the membrane as a helical segment; sequence EIGLREWLILIGIIVIAGILF. Residues 23-297 are Cytoplasmic-facing; that stretch reads DGWRRMRGGK…FERRALTQKR (275 aa). The segment at 48–151 is disordered; that stretch reads DEEGGSAEVL…AAPASNSVKE (104 aa). Basic and acidic residues predominate over residues 83–92; that stretch reads ARDREREPKP. The segment covering 124–133 has biased composition (acidic residues); the sequence is LFSDSDDDFA.

The protein belongs to the ZipA family. In terms of assembly, interacts with FtsZ via their C-terminal domains.

It localises to the cell inner membrane. Essential cell division protein that stabilizes the FtsZ protofilaments by cross-linking them and that serves as a cytoplasmic membrane anchor for the Z ring. Also required for the recruitment to the septal ring of downstream cell division proteins. This is Cell division protein ZipA from Pseudomonas putida (strain ATCC 47054 / DSM 6125 / CFBP 8728 / NCIMB 11950 / KT2440).